Here is a 375-residue protein sequence, read N- to C-terminus: MAKADFYETLGVAKSADEKELKSAFRKLAMKYHPDKNPDDKDAERKFKEINEAYEMLKDPQKRAAYDRYGHAAFEHGGMGGGGGGFAGGGFSDIFEDIFGEMMGGGRARQRSSGGRERGADLRYNMEITLEEAFSGKTAQIRVPTSITCDVCSGSGAKPGTQPKNCGTCQGSGRVRAAQGFFSIERTCPTCHGRGQIIPDPCPKCHGQGRVTEERSLSVNIPAGIEDGTRIRLQGEGEAGARGGPAGDLYIFLSVKPHEFYQRDGADLYCAVPISMTTAALGGTFDVATLDGTKSRVTVPEGTQAGKQFRLKSKGMPVLRSAQTGDLYIQIQIETPQKLTKRQRELLQEFEQISSKENNPESTGFFARMKEFFEG.

Positions 5–70 (DFYETLGVAK…QKRAAYDRYG (66 aa)) constitute a J domain. The CR-type zinc-finger motif lies at 136–214 (GKTAQIRVPT…CHGQGRVTEE (79 aa)). Zn(2+) contacts are provided by cysteine 149, cysteine 152, cysteine 166, cysteine 169, cysteine 188, cysteine 191, cysteine 202, and cysteine 205. CXXCXGXG motif repeat units lie at residues 149 to 156 (CDVCSGSG), 166 to 173 (CGTCQGSG), 188 to 195 (CPTCHGRG), and 202 to 209 (CPKCHGQG).

The protein belongs to the DnaJ family. Homodimer. Zn(2+) is required as a cofactor.

It localises to the cytoplasm. Functionally, participates actively in the response to hyperosmotic and heat shock by preventing the aggregation of stress-denatured proteins and by disaggregating proteins, also in an autonomous, DnaK-independent fashion. Unfolded proteins bind initially to DnaJ; upon interaction with the DnaJ-bound protein, DnaK hydrolyzes its bound ATP, resulting in the formation of a stable complex. GrpE releases ADP from DnaK; ATP binding to DnaK triggers the release of the substrate protein, thus completing the reaction cycle. Several rounds of ATP-dependent interactions between DnaJ, DnaK and GrpE are required for fully efficient folding. Also involved, together with DnaK and GrpE, in the DNA replication of plasmids through activation of initiation proteins. This Rhizobium etli (strain CIAT 652) protein is Chaperone protein DnaJ.